Here is a 333-residue protein sequence, read N- to C-terminus: DNA-directed RNA polymerase subunit alpha (333 aa).

The tract at residues 1–234 is alpha N-terminal domain (alpha-NTD); sequence MQISVNEFLT…QQLAAFVDLK (234 aa). Residues 248-333 form an alpha C-terminal domain (alpha-CTD) region; sequence IDPILLRPVD…SLKKDDKATA (86 aa).

Belongs to the RNA polymerase alpha chain family. Homodimer. The RNAP catalytic core consists of 2 alpha, 1 beta, 1 beta' and 1 omega subunit. When a sigma factor is associated with the core the holoenzyme is formed, which can initiate transcription.

It carries out the reaction RNA(n) + a ribonucleoside 5'-triphosphate = RNA(n+1) + diphosphate. Its function is as follows. DNA-dependent RNA polymerase catalyzes the transcription of DNA into RNA using the four ribonucleoside triphosphates as substrates. The polypeptide is DNA-directed RNA polymerase subunit alpha (Pseudomonas fluorescens (strain Pf0-1)).